A 177-amino-acid chain; its full sequence is tRNA-splicing endonuclease (177 aa).

Residues Y114, H123, and K154 contribute to the active site.

This sequence belongs to the tRNA-intron endonuclease family. Archaeal short subfamily. In terms of assembly, homotetramer; although the tetramer contains four active sites, only two participate in the cleavage. Therefore, it should be considered as a dimer of dimers.

It catalyses the reaction pretRNA = a 3'-half-tRNA molecule with a 5'-OH end + a 5'-half-tRNA molecule with a 2',3'-cyclic phosphate end + an intron with a 2',3'-cyclic phosphate and a 5'-hydroxyl terminus.. In terms of biological role, endonuclease that removes tRNA introns. Cleaves pre-tRNA at the 5'- and 3'-splice sites to release the intron. The products are an intron and two tRNA half-molecules bearing 2',3' cyclic phosphate and 5'-OH termini. Recognizes a pseudosymmetric substrate in which 2 bulged loops of 3 bases are separated by a stem of 4 bp. The protein is tRNA-splicing endonuclease of Methanococcus vannielii (strain ATCC 35089 / DSM 1224 / JCM 13029 / OCM 148 / SB).